We begin with the raw amino-acid sequence, 517 residues long: ATP synthase subunit alpha (517 aa).

Residue Gly173–Thr180 participates in ATP binding.

Belongs to the ATPase alpha/beta chains family. In terms of assembly, F-type ATPases have 2 components, CF(1) - the catalytic core - and CF(0) - the membrane proton channel. CF(1) has five subunits: alpha(3), beta(3), gamma(1), delta(1), epsilon(1). CF(0) has three main subunits: a(1), b(2) and c(9-12). The alpha and beta chains form an alternating ring which encloses part of the gamma chain. CF(1) is attached to CF(0) by a central stalk formed by the gamma and epsilon chains, while a peripheral stalk is formed by the delta and b chains.

The protein resides in the cell inner membrane. The catalysed reaction is ATP + H2O + 4 H(+)(in) = ADP + phosphate + 5 H(+)(out). Produces ATP from ADP in the presence of a proton gradient across the membrane. The alpha chain is a regulatory subunit. In Legionella pneumophila (strain Lens), this protein is ATP synthase subunit alpha.